Reading from the N-terminus, the 224-residue chain is UPF0758 protein Lm4b_01560 (224 aa).

One can recognise an MPN domain in the interval valine 102 to phenylalanine 224. 3 residues coordinate Zn(2+): histidine 173, histidine 175, and aspartate 186. The short motif at histidine 173–aspartate 186 is the JAMM motif element.

Belongs to the UPF0758 family.

This chain is UPF0758 protein Lm4b_01560, found in Listeria monocytogenes serotype 4b (strain CLIP80459).